A 126-amino-acid chain; its full sequence is Small ribosomal subunit protein uS13 (126 aa).

The tract at residues 96 to 126 (LPVRGQQTKTNARTRKGRRKGTVANKKKVSK) is disordered. Positions 107-126 (ARTRKGRRKGTVANKKKVSK) are enriched in basic residues.

Belongs to the universal ribosomal protein uS13 family. As to quaternary structure, part of the 30S ribosomal subunit. Forms a loose heterodimer with protein S19. Forms two bridges to the 50S subunit in the 70S ribosome.

In terms of biological role, located at the top of the head of the 30S subunit, it contacts several helices of the 16S rRNA. In the 70S ribosome it contacts the 23S rRNA (bridge B1a) and protein L5 of the 50S subunit (bridge B1b), connecting the 2 subunits; these bridges are implicated in subunit movement. Contacts the tRNAs in the A and P-sites. The polypeptide is Small ribosomal subunit protein uS13 (Hydrogenobaculum sp. (strain Y04AAS1)).